A 511-amino-acid chain; its full sequence is Putative thymidine phosphorylase (511 aa).

Belongs to the thymidine/pyrimidine-nucleoside phosphorylase family. Type 2 subfamily.

The enzyme catalyses thymidine + phosphate = 2-deoxy-alpha-D-ribose 1-phosphate + thymine. The polypeptide is Putative thymidine phosphorylase (Polaromonas sp. (strain JS666 / ATCC BAA-500)).